We begin with the raw amino-acid sequence, 271 residues long: Short-chain dehydrogenase PC-15 (271 aa).

Residues Ile8, Thr34, Lys40, Asp56, Asn84, Tyr148, Lys152, Val181, and Thr183 each coordinate NADP(+). Tyr148 serves as the catalytic Proton acceptor. The active-site Lowers pKa of active site Tyr is the Lys152.

It belongs to the short-chain dehydrogenases/reductases (SDR) family.

The protein operates within secondary metabolite biosynthesis. Its function is as follows. Short-chain dehydrogenase; part of the gene cluster that mediates the biosynthesis of the indole diterpenes penitrems. The geranylgeranyl diphosphate (GGPP) synthase penG catalyzes the first step in penitrem biosynthesis via conversion of farnesyl pyrophosphate and isopentyl pyrophosphate into geranylgeranyl pyrophosphate (GGPP). Condensation of indole-3-glycerol phosphate with GGPP by the prenyl transferase penC then forms 3-geranylgeranylindole (3-GGI). Epoxidation by the FAD-dependent monooxygenase penM leads to a epoxidized-GGI that is substrate of the terpene cyclase penB for cyclization to yield paspaline. Paspaline is subsequently converted to 13-desoxypaxilline by the cytochrome P450 monooxygenase penP, the latter being then converted to paxilline by the cytochrome P450 monooxygenase penQ. Paxilline is converted to beta-paxitriol via C-10 ketoreduction by the short-chain dehydrogenase PC-15 which can be monoprenylated at the C-20 by the indole diterpene prenyltransferase penD. A two-step elimination (acetylation and elimination) process performed by the O-acetyltransferase PC-16 and the P.simplicissimum ptmI-ortholog not yet identified in P.crustosum, leads to the production of the prenylated form of penijanthine. The FAD-linked oxidoreductase ptmO then converts the prenylated form of penijanthine into PC-M5 which is in turn transformed into PC-M4 by the aromatic dimethylallyltransferase PC-22. A series of oxidation steps involving 4 cytochrome P450 monooxygenases (PC-21, PC-05, PC-23, PC-20) and a FAD-dependent monooxygenase (PC-14) are required for the transformation of PC-M4 to penitrems A and E. Synthesis of these final products is proposed to proceed via penitrems D and C (PC-21, PC-05, PC-14) and penitrems B and F (PC-21, PC-05, PC-14, PC-23). This Penicillium crustosum (Blue mold fungus) protein is Short-chain dehydrogenase PC-15.